A 418-amino-acid polypeptide reads, in one-letter code: Perilipin-1 homolog (418 aa).

The required for lipid droplet localization stretch occupies residues 211–275; the sequence is LTIGQRVKNL…EKKTWVIEKS (65 aa).

It belongs to the perilipin family. In terms of tissue distribution, expressed in intestinal and epidermal cells. Expressed in the muscle and hypodermis.

Its subcellular location is the lipid droplet. Functionally, lipid droplet-associated protein which plays a role in lipid droplet clustering. In Caenorhabditis elegans, this protein is Perilipin-1 homolog.